The sequence spans 564 residues: Pyruvate decarboxylase (564 aa).

Pyruvate is bound by residues Asp28 and His115. Residues Thr390 and 413–415 contribute to the thiamine diphosphate site; that span reads GSI. Mg(2+) is bound at residue Asp444. Thiamine diphosphate is bound by residues 445–446 and 471–476; these read GS and NNGYTI. Asn471 and Gly473 together coordinate Mg(2+). Glu477 lines the pyruvate pocket.

It belongs to the TPP enzyme family. In terms of assembly, homotetramer. The cofactor is Mg(2+). Thiamine diphosphate is required as a cofactor.

It catalyses the reaction a 2-oxocarboxylate + H(+) = an aldehyde + CO2. The catalysed reaction is pyruvate + H(+) = acetaldehyde + CO2. This Hanseniaspora uvarum (Yeast) protein is Pyruvate decarboxylase (PDC).